Reading from the N-terminus, the 145-residue chain is D-aminoacyl-tRNA deacylase (145 aa).

Positions 137 to 138 (GP) match the Gly-cisPro motif, important for rejection of L-amino acids motif.

This sequence belongs to the DTD family. In terms of assembly, homodimer.

The protein localises to the cytoplasm. The enzyme catalyses glycyl-tRNA(Ala) + H2O = tRNA(Ala) + glycine + H(+). The catalysed reaction is a D-aminoacyl-tRNA + H2O = a tRNA + a D-alpha-amino acid + H(+). Its function is as follows. An aminoacyl-tRNA editing enzyme that deacylates mischarged D-aminoacyl-tRNAs. Also deacylates mischarged glycyl-tRNA(Ala), protecting cells against glycine mischarging by AlaRS. Acts via tRNA-based rather than protein-based catalysis; rejects L-amino acids rather than detecting D-amino acids in the active site. By recycling D-aminoacyl-tRNA to D-amino acids and free tRNA molecules, this enzyme counteracts the toxicity associated with the formation of D-aminoacyl-tRNA entities in vivo and helps enforce protein L-homochirality. The chain is D-aminoacyl-tRNA deacylase from Lactobacillus gasseri (strain ATCC 33323 / DSM 20243 / BCRC 14619 / CIP 102991 / JCM 1131 / KCTC 3163 / NCIMB 11718 / NCTC 13722 / AM63).